The primary structure comprises 92 residues: Small ribosomal subunit protein bS20 (92 aa).

The segment covering 1–11 has biased composition (basic residues); that stretch reads MANIKSQKKRI. The interval 1 to 22 is disordered; that stretch reads MANIKSQKKRIRQNEKARLRNK.

The protein belongs to the bacterial ribosomal protein bS20 family.

Its function is as follows. Binds directly to 16S ribosomal RNA. This Thermobifida fusca (strain YX) protein is Small ribosomal subunit protein bS20.